Consider the following 237-residue polypeptide: 7-cyano-7-deazaguanine synthase (237 aa).

9-19 (YSGGLDSTTCL) is an ATP binding site. Zn(2+) contacts are provided by Cys189, Cys199, Cys202, and Cys205.

Belongs to the QueC family. It depends on Zn(2+) as a cofactor.

It carries out the reaction 7-carboxy-7-deazaguanine + NH4(+) + ATP = 7-cyano-7-deazaguanine + ADP + phosphate + H2O + H(+). It functions in the pathway purine metabolism; 7-cyano-7-deazaguanine biosynthesis. Functionally, catalyzes the ATP-dependent conversion of 7-carboxy-7-deazaguanine (CDG) to 7-cyano-7-deazaguanine (preQ(0)). This Geobacter sulfurreducens (strain ATCC 51573 / DSM 12127 / PCA) protein is 7-cyano-7-deazaguanine synthase.